Reading from the N-terminus, the 437-residue chain is Tol-Pal system protein TolB (437 aa).

Residues 1–23 (MQKRHPIIYLLITLLIFVPVSYG) form the signal peptide.

The protein belongs to the TolB family. In terms of assembly, the Tol-Pal system is composed of five core proteins: the inner membrane proteins TolA, TolQ and TolR, the periplasmic protein TolB and the outer membrane protein Pal. They form a network linking the inner and outer membranes and the peptidoglycan layer.

It is found in the periplasm. Part of the Tol-Pal system, which plays a role in outer membrane invagination during cell division and is important for maintaining outer membrane integrity. This is Tol-Pal system protein TolB from Coxiella burnetii (strain RSA 493 / Nine Mile phase I).